We begin with the raw amino-acid sequence, 441 residues long: Trigger factor (441 aa).

The 86-residue stretch at 175 to 260 folds into the PPIase FKBP-type domain; it reads GDKVVIDYNS…LVSIMVPKDV (86 aa).

This sequence belongs to the FKBP-type PPIase family. Tig subfamily.

The protein resides in the cytoplasm. It carries out the reaction [protein]-peptidylproline (omega=180) = [protein]-peptidylproline (omega=0). Functionally, involved in protein export. Acts as a chaperone by maintaining the newly synthesized protein in an open conformation. Functions as a peptidyl-prolyl cis-trans isomerase. This Anaplasma marginale (strain St. Maries) protein is Trigger factor.